The chain runs to 370 residues: Actin-related protein 2/3 complex subunit 1A-B (370 aa).

6 WD repeats span residues 6–45 (FLLEPITCHAWNKDLTQIAISPNNHEVHIYKNSGNQWVKC), 50–89 (EHNGHITGIDWAPKSDRIVTCGADRNAYVWSQKDGVWKPT), 140–179 (PIRSTVLSLDWHPNNVLLAAGSCDFKTRVFSAYIKEVDEK), 202–241 (SSGGWVHSVSFSASGNKLAWVSHDSTVSVADASKNMSVSQ), 244–284 (TEFL…TFVS), and 322–365 (LHQN…SYIQ).

This sequence belongs to the WD repeat ARPC1 family. In terms of assembly, component of the Arp2/3 complex.

The protein resides in the cytoplasm. It localises to the cytoskeleton. The protein localises to the nucleus. Its function is as follows. Probably functions as a component of the Arp2/3 complex which is involved in regulation of actin polymerization and together with an activating nucleation-promoting factor (NPF) mediates the formation of branched actin networks. In addition to its role in the cytoplasmic cytoskeleton, the Arp2/3 complex also promotes actin polymerization in the nucleus, thereby regulating gene transcription and repair of damaged DNA. The chain is Actin-related protein 2/3 complex subunit 1A-B (arpc1a-b) from Xenopus laevis (African clawed frog).